The primary structure comprises 79 residues: D-alanyl carrier protein (79 aa).

The 76-residue stretch at 1 to 76 (MKEQIFDIIE…KIAARVQEKK (76 aa)) folds into the Carrier domain. At Ser-34 the chain carries O-(pantetheine 4'-phosphoryl)serine.

This sequence belongs to the DltC family. In terms of processing, 4'-phosphopantetheine is transferred from CoA to a specific serine of apo-DCP.

The protein localises to the cytoplasm. It functions in the pathway cell wall biogenesis; lipoteichoic acid biosynthesis. Functionally, carrier protein involved in the D-alanylation of lipoteichoic acid (LTA). The loading of thioester-linked D-alanine onto DltC is catalyzed by D-alanine--D-alanyl carrier protein ligase DltA. The DltC-carried D-alanyl group is further transferred to cell membrane phosphatidylglycerol (PG) by forming an ester bond, probably catalyzed by DltD. D-alanylation of LTA plays an important role in modulating the properties of the cell wall in Gram-positive bacteria, influencing the net charge of the cell wall. The polypeptide is D-alanyl carrier protein (Lactococcus lactis subsp. lactis (strain IL1403) (Streptococcus lactis)).